Here is an 87-residue protein sequence, read N- to C-terminus: Large ribosomal subunit protein bL28 (87 aa).

It belongs to the bacterial ribosomal protein bL28 family.

This is Large ribosomal subunit protein bL28 from Methylacidiphilum infernorum (isolate V4) (Methylokorus infernorum (strain V4)).